Consider the following 637-residue polypeptide: Chaperone protein HtpG (637 aa).

The segment at Met-1–Arg-330 is a; substrate-binding. The tract at residues Glu-331–Arg-551 is b. The c stretch occupies residues Leu-552–Leu-637.

It belongs to the heat shock protein 90 family. In terms of assembly, homodimer.

It localises to the cytoplasm. In terms of biological role, molecular chaperone. Has ATPase activity. This is Chaperone protein HtpG from Nitratidesulfovibrio vulgaris (strain ATCC 29579 / DSM 644 / CCUG 34227 / NCIMB 8303 / VKM B-1760 / Hildenborough) (Desulfovibrio vulgaris).